Reading from the N-terminus, the 352-residue chain is Maleylacetate reductase (352 aa).

This sequence belongs to the iron-containing alcohol dehydrogenase family.

It catalyses the reaction 3-oxoadipate + NAD(+) = maleylacetate + NADH + H(+). The enzyme catalyses 3-oxoadipate + NADP(+) = maleylacetate + NADPH + H(+). It functions in the pathway aromatic compound metabolism; 3-chlorocatechol degradation. This Pseudomonas aeruginosa protein is Maleylacetate reductase (clcE).